The sequence spans 241 residues: Endothelial protein C receptor (241 aa).

A signal peptide spans 1 to 20 (MLTKFLSLLLLLLLLGCAFC). Over 21–213 (NSDGSQSLHM…GSQTGRSYTS (193 aa)) the chain is Extracellular. N-linked (GlcNAc...) asparagine glycans are attached at residues Asn-47, Asn-64, Asn-139, Asn-165, and Asn-175. Residues 214-234 (LVLGILMGCFIIAGVAVGIFL) traverse the membrane as a helical segment. Topologically, residues 235–241 (CTGGRRC) are cytoplasmic.

Its subcellular location is the membrane. Its function is as follows. Binds activated protein C. Enhances protein C activation by the thrombin-thrombomodulin complex; plays a role in the protein C pathway controlling blood coagulation. This chain is Endothelial protein C receptor (Procr), found in Rattus norvegicus (Rat).